The primary structure comprises 485 residues: MVAIDLGASSGRVMLASYYPGQQQLTLREVCRFTNQIKSIDGSDVWDIDAIEQSIREGLSQLDSEGIALDSIGIDSWGVDFVLLDKQGKRIGQPVSYRDSRTQGVMARAQQTLGSNAIYRRTGIQFLPFNTLYQLRALSEQQPHLLADVAHLLLIPDYLHYRLTGQLNWEYTNASTTQLLNIETGDWDSDLLAYAGVPAHWFAKPGKPGNTIGYWHSANGQQVPVVAVATHDTASAVLAAPLIDADAAYLSSGTWSLMGFESGTPLTHQQAQCSNITNEGGAEGRYRVLKNIMGLWLLQRATDELQIDDLPQLIEQAARQPACRSLINPNDSRFINPPNMCREIQNACREHQFPVPNTAAQLARCIFDSLAMLYRQVAQELATLRGRPISHLHIVGGGCQNQFLNQLCADACGLNVSMGPVEASTLGNIGSQLISLGEVADVTHYRRIVANNFPLHHLSPHDNSDFAAHWLQFQSLSQLPKELCI.

An ATP-binding site is contributed by 8 to 12 (ASSGR). Residues Gly-78 and 231 to 233 (HDT) contribute to the substrate site. Asp-232 serves as the catalytic Proton acceptor. Thr-254 provides a ligand contact to ATP. A substrate-binding site is contributed by Asn-291. Gln-299 is a binding site for ATP. A disulfide bridge connects residues Cys-348 and Cys-365. Residue Gly-397 participates in ATP binding. Residues Cys-408 and Cys-412 are joined by a disulfide bond.

It belongs to the rhamnulokinase family. The cofactor is Mg(2+).

The enzyme catalyses L-rhamnulose + ATP = L-rhamnulose 1-phosphate + ADP + H(+). Its pathway is carbohydrate degradation; L-rhamnose degradation; glycerone phosphate from L-rhamnose: step 2/3. Involved in the catabolism of L-rhamnose (6-deoxy-L-mannose). Catalyzes the transfer of the gamma-phosphate group from ATP to the 1-hydroxyl group of L-rhamnulose to yield L-rhamnulose 1-phosphate. This Yersinia pestis bv. Antiqua (strain Antiqua) protein is Rhamnulokinase.